Consider the following 653-residue polypeptide: Protein CBFA2T3 (653 aa).

Positions 1 to 10 (MPASRLRDRA) are enriched in basic and acidic residues. The tract at residues 1–109 (MPASRLRDRA…HTHREDGPAT (109 aa)) is disordered. The required for nucleolar targeting (in isoform 1) stretch occupies residues 1 to 127 (MPASRLRDRA…CLKWSMVCLL (127 aa)). Positions 1-430 (MPASRLRDRA…RRCQEADREE (430 aa)) are mediates interaction with PDE7A (in isoform 2). The interval 1–435 (MPASRLRDRA…ADREELNHWA (435 aa)) is mediates localization to the nucleus. Positions 11-23 (ASSASGSTCGSMS) are enriched in low complexity. Residues 75–86 (STPPSMPPPPPA) show a composition bias toward pro residues. The interaction with ZBTB33 stretch occupies residues 145–242 (PNGFSNGPAT…IPFLKANLPL (98 aa)). In terms of domain architecture, TAFH spans 171–266 (ARQLSKLKRF…TPAQYLAQHE (96 aa)). The segment at 176-268 (KLKRFLTTLQ…AQYLAQHEQL (93 aa)) is interaction with HIF1A. Residues 284–342 (LLEVNENGKRRTPDRTKENGSDRDPLHPEHLSKRPCTLNPAQRYSPSNGPPQPTPPPHY) form a disordered region. Residues 289–315 (ENGKRRTPDRTKENGSDRDPLHPEHLS) show a composition bias toward basic and acidic residues. Over residues 331–341 (NGPPQPTPPPH) the composition is skewed to pro residues. The segment at 394–412 (EEWKHLNNLLNCIMDMVEK) is nervy homology region 2 (NHR2); essential for down-regulation of PFKFB3, PFKFB4 and PDK1 expression. A compositionally biased stretch (basic and acidic residues) spans 434-446 (WARRYSDAEDTKK). A disordered region spans residues 434–472 (WARRYSDAEDTKKGPAPAAARPRSSSAGPEGPQLDVPRE). Over residues 447 to 462 (GPAPAAARPRSSSAGP) the composition is skewed to low complexity. Ser457 and Ser459 each carry phosphoserine. Position 479 is a phosphothreonine (Thr479). Residues 485-506 (DIWRKAEEAVNEVKRQAMSELQ) are mediates interaction with PRKAR2A. Residues 485–533 (DIWRKAEEAVNEVKRQAMSELQKAVSDAERKAHELITTERAKMERALAE) are nervy homology region 3 (NHR3); essential for down-regulation of PFKFB3, PFKFB4 and PDK1 expression. Positions 488–543 (RKAEEAVNEVKRQAMSELQKAVSDAERKAHELITTERAKMERALAEAKRQASEDAL) form a coiled coil. 8 residues coordinate Zn(2+): Cys556, Cys559, Cys567, Cys570, Cys576, Cys580, His588, and Cys592. The segment at 556–592 (CWNCGRKASETCSGCNAARYCGSFCQHRDWEKHHHVC) adopts an MYND-type zinc-finger fold. The interval 603–653 (VADPVPGPPEAAHSLGPSLPVGAASPSEAGSAGPSRPGSPSPPGPLDTVPR) is disordered. A compositionally biased stretch (low complexity) spans 622 to 638 (PVGAASPSEAGSAGPSR). Phosphoserine is present on residues Ser637 and Ser641. At Thr650 the chain carries Phosphothreonine.

It belongs to the CBFA2T family. Homooligomer. Homotetramerization is mediated by nervy homology region 2 (NRH2). Can interact with RUNX1T1 and CBFA2T2; heterotetramerization between members of the CBFA2T family is proposed. Component of a TAL-1 complex composed at least of CBFA2T3, LDB1, TAL1 and TCF3. Interacts with ERBB4, HDAC1, HDAC2, HDAC3, HDAC6, HDAC8, NCOR1, NCOR2, and ZNF652. According to PubMed:12242670, may not interact with HDAC6. Interacts with PLXNA1, PLXNA3 and PRKAR1A. Isoform 2 interacts with PRKAR2A, PDE7A and probably PDE4A. Interacts with ZBTB4, ZBTB38 and ZBTB33. Interacts with HIF1A and EGLN1. Interacts with the AML1-MTG8/ETO fusion protein. As to expression, widely expressed with higher expression in heart, pancreas, skeletal muscle, spleen, thymus and peripheral blood leukocytes. Expressed in hematopoietic cells (at protein level).

It is found in the nucleus. The protein localises to the nucleolus. It localises to the nucleoplasm. Its subcellular location is the golgi apparatus membrane. Transcriptional corepressor which facilitates transcriptional repression via its association with DNA-binding transcription factors and recruitment of other corepressors and histone-modifying enzymes. Can repress the expression of MMP7 in a ZBTB33-dependent manner. Reduces the protein levels and stability of the transcriptinal regulator HIF1A; interacts with EGLN1 and promotes the HIF1A prolyl hydroxylation-dependent ubiquitination and proteasomal degradation pathway. Contributes to inhibition of glycolysis and stimulation of mitochondrial respiration by down-regulating the expression of glycolytic genes including PFKFB3, PFKFB4, PDK1, PFKP, LDHA and HK1 which are direct targets of HIF1A. Regulates the proliferation and the differentiation of erythroid progenitors by repressing the expression of TAL1 target genes. Plays a role in granulocyte differentiation. In terms of biological role, isoform 2 functions as an A-kinase-anchoring protein. The chain is Protein CBFA2T3 (CBFA2T3) from Homo sapiens (Human).